The chain runs to 373 residues: 4-hydroxy-3-methylbut-2-en-1-yl diphosphate synthase (flavodoxin) (373 aa).

[4Fe-4S] cluster contacts are provided by Cys270, Cys273, Cys305, and Glu312.

The protein belongs to the IspG family. It depends on [4Fe-4S] cluster as a cofactor.

It catalyses the reaction (2E)-4-hydroxy-3-methylbut-2-enyl diphosphate + oxidized [flavodoxin] + H2O + 2 H(+) = 2-C-methyl-D-erythritol 2,4-cyclic diphosphate + reduced [flavodoxin]. Its pathway is isoprenoid biosynthesis; isopentenyl diphosphate biosynthesis via DXP pathway; isopentenyl diphosphate from 1-deoxy-D-xylulose 5-phosphate: step 5/6. Its function is as follows. Converts 2C-methyl-D-erythritol 2,4-cyclodiphosphate (ME-2,4cPP) into 1-hydroxy-2-methyl-2-(E)-butenyl 4-diphosphate. The sequence is that of 4-hydroxy-3-methylbut-2-en-1-yl diphosphate synthase (flavodoxin) from Photorhabdus laumondii subsp. laumondii (strain DSM 15139 / CIP 105565 / TT01) (Photorhabdus luminescens subsp. laumondii).